Reading from the N-terminus, the 107-residue chain is MSVVIRLARAGTKKRPFYHVVVADSRFPRDGRFIERLGYFNPLMAKDNEARLKLDLDKVKDWLAKGAQPSDRVARFLDTAGIKKREARNNPEKAVPRKERKAAEAGK.

The segment at 85–107 (REARNNPEKAVPRKERKAAEAGK) is disordered.

It belongs to the bacterial ribosomal protein bS16 family.

In Rhodopseudomonas palustris (strain BisB5), this protein is Small ribosomal subunit protein bS16.